We begin with the raw amino-acid sequence, 261 residues long: Rho-related GTP-binding protein RhoU (261 aa).

The segment at 1–48 (MAPQQGRPALPARCEPPAAPPVPPRRERGGRGARGPGVSGGRGRAGGA) is disordered. A compositionally biased stretch (low complexity) spans 7-16 (RPALPARCEP). Residues 32 to 48 (GARGPGVSGGRGRAGGA) are compositionally biased toward gly residues. GTP-binding positions include 59 to 66 (GDGAVGKT), 106 to 110 (DTAGQ), and 164 to 167 (TQSD). Glycyl lysine isopeptide (Lys-Gly) (interchain with G-Cter in ubiquitin) cross-links involve residues Lys-180 and Lys-251. Cys-259 carries the S-palmitoyl cysteine lipid modification.

This sequence belongs to the small GTPase superfamily. Rho family. As to quaternary structure, interacts with PAK1. Interacts with PAK3. Interacts with ARHGAP30 in a GTP-independent manner. In its GTP-loaded conformation, interacts with ARHGAP31. Interacts with PTK2B/PYK2. Interacts with PAK4; interaction protects RHOU from ubiquitination and subsequent degradation. The cofactor is Mg(2+). In terms of processing, tyrosine phosphorylated by SRC in response to PTK2B/PYK2 activation. Post-translationally, ubiquitinated. 'Lys-48'-linked ubiquitination at Lys-180 and Lys-251 by the ECS(RAB40A) complex leading to its degradation.

The protein resides in the cell membrane. Its subcellular location is the golgi apparatus membrane. It is found in the cell junction. The protein localises to the focal adhesion. It localises to the cell projection. The protein resides in the podosome. Its function is as follows. Binds to and activates protein kinase PAK1. Plays a role in the regulation of cell morphology, cytoskeletal organization and focal adhesion assembly during cell migration. Also stimulates quiescent cells to reenter the cell cycle. Has no detectable GTPase activity but its high intrinsic guanine nucleotide exchange activity suggests it is constitutively GTP-bound. The polypeptide is Rho-related GTP-binding protein RhoU (Mus musculus (Mouse)).